A 91-amino-acid polypeptide reads, in one-letter code: Small ribosomal subunit protein uS19 (91 aa).

It belongs to the universal ribosomal protein uS19 family.

Its function is as follows. Protein S19 forms a complex with S13 that binds strongly to the 16S ribosomal RNA. The polypeptide is Small ribosomal subunit protein uS19 (Delftia acidovorans (strain DSM 14801 / SPH-1)).